The chain runs to 371 residues: Histidinol-phosphate aminotransferase 2 (371 aa).

At Lys-232 the chain carries N6-(pyridoxal phosphate)lysine.

Belongs to the class-II pyridoxal-phosphate-dependent aminotransferase family. Histidinol-phosphate aminotransferase subfamily. Homodimer. The cofactor is pyridoxal 5'-phosphate.

The enzyme catalyses L-histidinol phosphate + 2-oxoglutarate = 3-(imidazol-4-yl)-2-oxopropyl phosphate + L-glutamate. It participates in amino-acid biosynthesis; L-histidine biosynthesis; L-histidine from 5-phospho-alpha-D-ribose 1-diphosphate: step 7/9. In Methylococcus capsulatus (strain ATCC 33009 / NCIMB 11132 / Bath), this protein is Histidinol-phosphate aminotransferase 2.